Here is a 260-residue protein sequence, read N- to C-terminus: Proliferating cell nuclear antigen (260 aa).

Residues 61–80 (RCDRNISMGMNLGSMAKILK) mediate DNA binding.

Belongs to the PCNA family. Homotrimer. Forms a complex with activator 1 heteropentamer in the presence of ATP.

The protein localises to the nucleus. Functionally, this protein is an auxiliary protein of DNA polymerase delta and is involved in the control of eukaryotic DNA replication by increasing the polymerase's processibility during elongation of the leading strand. This Sarcophaga crassipalpis (Flesh fly) protein is Proliferating cell nuclear antigen (PCNA).